The following is a 289-amino-acid chain: Pantothenate synthetase (289 aa).

33 to 40 (MGNLHDGH) contributes to the ATP binding site. The Proton donor role is filled by His-40. Gln-64 is a (R)-pantoate binding site. Position 64 (Gln-64) interacts with beta-alanine. 155-158 (GKKD) serves as a coordination point for ATP. Residue Gln-161 participates in (R)-pantoate binding. ATP contacts are provided by residues Ala-184 and 192-195 (LSSR).

Belongs to the pantothenate synthetase family. In terms of assembly, homodimer.

The protein resides in the cytoplasm. The enzyme catalyses (R)-pantoate + beta-alanine + ATP = (R)-pantothenate + AMP + diphosphate + H(+). It participates in cofactor biosynthesis; (R)-pantothenate biosynthesis; (R)-pantothenate from (R)-pantoate and beta-alanine: step 1/1. Functionally, catalyzes the condensation of pantoate with beta-alanine in an ATP-dependent reaction via a pantoyl-adenylate intermediate. This chain is Pantothenate synthetase, found in Acidovorax sp. (strain JS42).